The following is a 266-amino-acid chain: Phosphate import ATP-binding protein PstB (266 aa).

The ABC transporter domain occupies 15 to 261; it reads VQKSVVNKLN…PKNKQTEDYI (247 aa). An ATP-binding site is contributed by 50-57; the sequence is GPSGCGKS.

Belongs to the ABC transporter superfamily. Phosphate importer (TC 3.A.1.7) family. In terms of assembly, the complex is composed of two ATP-binding proteins (PstB), two transmembrane proteins (PstC and PstA) and a solute-binding protein (PstS).

The protein localises to the cell inner membrane. The catalysed reaction is phosphate(out) + ATP + H2O = ADP + 2 phosphate(in) + H(+). Part of the ABC transporter complex PstSACB involved in phosphate import. Responsible for energy coupling to the transport system. The chain is Phosphate import ATP-binding protein PstB from Nitrosomonas europaea (strain ATCC 19718 / CIP 103999 / KCTC 2705 / NBRC 14298).